Consider the following 157-residue polypeptide: 2-C-methyl-D-erythritol 2,4-cyclodiphosphate synthase (157 aa).

The a divalent metal cation site is built by Asp8 and His10. Residues 8–10 (DVH) and 34–35 (HS) contribute to the 4-CDP-2-C-methyl-D-erythritol 2-phosphate site. His42 lines the a divalent metal cation pocket. 4-CDP-2-C-methyl-D-erythritol 2-phosphate-binding positions include 56–58 (DIG), 61–65 (FPDTD), 100–106 (AQAPKML), 132–135 (TTTE), Phe139, and Arg142.

This sequence belongs to the IspF family. In terms of assembly, homotrimer. The cofactor is a divalent metal cation.

The enzyme catalyses 4-CDP-2-C-methyl-D-erythritol 2-phosphate = 2-C-methyl-D-erythritol 2,4-cyclic diphosphate + CMP. It participates in isoprenoid biosynthesis; isopentenyl diphosphate biosynthesis via DXP pathway; isopentenyl diphosphate from 1-deoxy-D-xylulose 5-phosphate: step 4/6. Involved in the biosynthesis of isopentenyl diphosphate (IPP) and dimethylallyl diphosphate (DMAPP), two major building blocks of isoprenoid compounds. Catalyzes the conversion of 4-diphosphocytidyl-2-C-methyl-D-erythritol 2-phosphate (CDP-ME2P) to 2-C-methyl-D-erythritol 2,4-cyclodiphosphate (ME-CPP) with a corresponding release of cytidine 5-monophosphate (CMP). This chain is 2-C-methyl-D-erythritol 2,4-cyclodiphosphate synthase, found in Photorhabdus laumondii subsp. laumondii (strain DSM 15139 / CIP 105565 / TT01) (Photorhabdus luminescens subsp. laumondii).